We begin with the raw amino-acid sequence, 291 residues long: Protein CMSS1 (291 aa).

Residues 1–96 (MADDLGDEWW…KKTITDVLTS (96 aa)) are disordered. A compositionally biased stretch (acidic residues) spans 17-27 (DVPEVEEETEH). The segment covering 58–79 (VKKECFITQERSEEKPDNESNK) has biased composition (basic and acidic residues).

Belongs to the CMS1 family.

This Danio rerio (Zebrafish) protein is Protein CMSS1 (cmss1).